Reading from the N-terminus, the 54-residue chain is Light-harvesting protein B-800/850 alpha chain (54 aa).

At 1–14 (MTNGKIWLVVKPTV) the chain is on the cytoplasmic side. Residues 15-35 (GVPLFLSAAVIASVVIHAAVL) traverse the membrane as a helical segment. H31 provides a ligand contact to a bacteriochlorophyll. The Periplasmic segment spans residues 36 to 54 (TTTTWLPAYYQGSAAVAAE).

The protein belongs to the antenna complex alpha subunit family. The core complex is formed by different alpha and beta chains, binding bacteriochlorophyll molecules, and arranged most probably in tetrameric structures disposed around the reaction center. The non-pigmented gamma chains may constitute additional components.

It localises to the cell inner membrane. Antenna complexes are light-harvesting systems, which transfer the excitation energy to the reaction centers. This chain is Light-harvesting protein B-800/850 alpha chain (pucA), found in Cereibacter sphaeroides (Rhodobacter sphaeroides).